The chain runs to 487 residues: L-tartrate/succinate antiporter (487 aa).

14 helical membrane-spanning segments follow: residues 10-30 (YLAP…AGLE), 33-53 (TWLY…EPVP), 54-74 (GAVV…WLLF), 93-113 (WAVS…FMFG), 137-157 (TLFL…VTPS), 189-209 (IGSY…AIFL), 236-256 (FLGM…LAYV), 292-312 (LMVG…AAMV), 313-333 (GYSV…DIVS), 340-360 (VFFW…TGFI), 370-390 (SLSG…FYLL), 393-413 (FFAS…AAAL), 418-438 (IPLP…SILT), and 465-485 (IFGL…MPVV).

It belongs to the SLC13A/DASS transporter (TC 2.A.47) family. DIT1 subfamily.

It localises to the cell inner membrane. The enzyme catalyses (2R,3R)-tartrate(out) + succinate(in) = (2R,3R)-tartrate(in) + succinate(out). In terms of biological role, catalyzes the uptake of tartrate in exchange for intracellular succinate. Essential for anaerobic L-tartrate fermentation. This is L-tartrate/succinate antiporter (ttdT) from Shigella flexneri.